Reading from the N-terminus, the 89-residue chain is Small ribosomal subunit protein uS15 (89 aa).

It belongs to the universal ribosomal protein uS15 family. Part of the 30S ribosomal subunit. Forms a bridge to the 50S subunit in the 70S ribosome, contacting the 23S rRNA.

In terms of biological role, one of the primary rRNA binding proteins, it binds directly to 16S rRNA where it helps nucleate assembly of the platform of the 30S subunit by binding and bridging several RNA helices of the 16S rRNA. Functionally, forms an intersubunit bridge (bridge B4) with the 23S rRNA of the 50S subunit in the ribosome. The polypeptide is Small ribosomal subunit protein uS15 (Pseudomonas putida (strain GB-1)).